Here is an 86-residue protein sequence, read N- to C-terminus: Small ribosomal subunit protein bS16 (86 aa).

It belongs to the bacterial ribosomal protein bS16 family.

This chain is Small ribosomal subunit protein bS16, found in Xanthomonas campestris pv. campestris (strain 8004).